A 381-amino-acid polypeptide reads, in one-letter code: MALATPLPATQAAVKVTGPSTVDVSAATTLPVLEAFEVLVRVACVSINHVDGKSADMSPTPGATSGVDFSGLIVALGSKVDSDEFRANNNMRALSIGDRVFGGVFGNNPLRHDNGAFAEYVAVPARLIWHMPAAMDFSTAATIGATLATVGLALFQYLQVPMPSTQTISDSKTIPDPQQKTRMALVYGGGTATGAMAIQVLKLAGFRPITTCSPGSAARAMHLGAAATFDYRSPTCGADLREHTANGLELALDCITDTASMSICYEALGSAGGRYVALDAFPLRGHTRRSVAAEWVCTYTQFGHAVAWVPPYNLDARPRDREIAEAWYVVAQQLVDEGLIEPYPKEDRTGGLAAVGEGMRAVWKGEISGRKLAYPIAEECY.

NADP(+) is bound at residue 50–53; sequence VDGK. 145–152 contacts substrate; that stretch reads ATLATVGL. Residues 213–216, Y231, and 278–279 contribute to the NADP(+) site; these read SPGS and LD. Residue 298–302 coordinates substrate; the sequence is TYTQF. 367–368 contacts NADP(+); that stretch reads IS.

This sequence belongs to the zinc-containing alcohol dehydrogenase family. As to quaternary structure, monomer.

It catalyses the reaction N-[(4E,6E,10S,12Z,14E)-6,10-dimethyl-3-oxohexadeca-4,6,12,14-tetraenoyl]-L-tyrosyl-[ACP] = (3E,5S)-3-[(2E,4E,8S,10E,12Z)-1-hydroxy-4,8-dimethyltetradeca-2,4,10,12-tetraen-1-ylidene]-5-[(4-hydroxyphenyl)methyl]pyrrolidine-2,4-dione + holo-[ACP] + H(+). It participates in mycotoxin biosynthesis. Functionally, trans-enoyl reductase; part of the gene cluster that mediates the biosynthesis of ilicicolin H, a 4-hydroxy-2-pyridonealkaloid that has potent and broad antifungal activities by inhibiting the mitochondrial respiration chain. IliB collaborates with the hybrid PKS-NRPS synthetase iliA to assemble the backbone of ilicicolin H. The PKS portion of iliA and trans-acting enoyl reductase iliB work together to construct an octaketide, and two methyl groups are introduced by the MT domain of iliA during the chain assembly. The nascent chain is then condensed with tyrosine, catalyzed by the iliA C domain, and the resulting PKS-NRPS hybrid is offloaded by the iliA RED domain to form an advanced tetramic acid intermediate. The biosynthesis of ilicicolin H starts with formation of the tetramic acid by the hybrid PKS-NRPS synthetase iliA with the partnering trans-enoyl reductase iliB since iliA lacks a designated enoylreductase (ER) domain. The cytochrome P450 monooxygenase iliC then catalyzes the ring expansion of the tetramate to the acyclic 2-pyridone. The pericyclase iliD further converts the acyclic 2-pyridone into 8-epi-ilicicolin H. 8-epi-ilicicolin H might then spontaneously convert to ilicicolin H since ilicicolin H is produced in the absence of the epimerase iliE, in contrast to what was observed for the Talaromyces variabilis ilicolin H biosynthetic pathway. This Neonectria sp. (strain DH2) protein is Trans-enoyl reductase iliB.